Consider the following 107-residue polypeptide: Large ribosomal subunit protein uL24 (107 aa).

Belongs to the universal ribosomal protein uL24 family. Part of the 50S ribosomal subunit.

Functionally, one of two assembly initiator proteins, it binds directly to the 5'-end of the 23S rRNA, where it nucleates assembly of the 50S subunit. In terms of biological role, one of the proteins that surrounds the polypeptide exit tunnel on the outside of the subunit. This is Large ribosomal subunit protein uL24 from Gluconacetobacter diazotrophicus (strain ATCC 49037 / DSM 5601 / CCUG 37298 / CIP 103539 / LMG 7603 / PAl5).